The chain runs to 785 residues: E3 UFM1-protein ligase 1 homolog (785 aa).

The segment at glycine 404–valine 483 is disordered.

It belongs to the UFL1 family.

Functionally, E3 UFM1-protein ligase that mediates ufmylation of target proteins. The sequence is that of E3 UFM1-protein ligase 1 homolog from Drosophila willistoni (Fruit fly).